The following is a 400-amino-acid chain: Large envelope protein (400 aa).

M1 carries the N-acetylmethionine modification. G2 carries the N-myristoyl glycine; by host lipid modification. The pre-S1 stretch occupies residues 2-119 (GAPLSTARRG…PPLRDTHPQA (118 aa)). Residues 2–174 (GAPLSTARRG…FSKTGDPAMN (173 aa)) are pre-S. Over 2-181 (GAPLSTARRG…AMNMENITSG (180 aa)) the chain is Virion surface; in external conformation. The Intravirion; in internal conformation segment spans residues 2–253 (GAPLSTARRG…PGYRWMCLRR (252 aa)). An N-linked (GlcNAc...) asparagine glycan is attached at P4. Residues 70 to 115 (PHGGLLGWSPQAQGILTTSPPDPPPASTNRRSGRKPTPVSPPLRDT) are disordered. Residues 79–88 (PQAQGILTTS) are compositionally biased toward polar residues. Positions 120–174 (MQWNSTQFHQALLDPRVRGLYLPAGGSSSETQNPVPTIASLTSSIFSKTGDPAMN) are pre-S2. The chain crosses the membrane as a helical span at residues 182-202 (LLGPLLVLQAVCFLLTKILTI). The Intravirion; in external conformation portion of the chain corresponds to 203–253 (PQSLDSWWTSLNFLGVPPGCPGQNSQSPISNHLPTSCPPTCPGYRWMCLRR). Residues 254-274 (FIIFLFILLLCLIFLLVLLDY) form a helical membrane-spanning segment. Residues 275–348 (QGMLPVCPLL…WASARFSWLS (74 aa)) lie on the Virion surface side of the membrane. An N-linked (GlcNAc...) asparagine; by host glycan is attached at N320. The helical transmembrane segment at 349–369 (LLVQFVQWCVGLSPTVWLLVI) threads the bilayer. The Intravirion portion of the chain corresponds to 370-375 (WMIWYW). Residues 376 to 398 (GPNLCSILSPFIPLLPIFCYLWA) form a helical membrane-spanning segment. Residues 399–400 (SI) are Virion surface-facing.

The protein belongs to the orthohepadnavirus major surface antigen family. In terms of assembly, in its internal form (Li-HBsAg), interacts with the capsid protein and with the isoform S. Interacts with host chaperone CANX. As to quaternary structure, associates with host chaperone CANX through its pre-S2 N glycan; this association may be essential for isoform M proper secretion. Interacts with isoform L. Interacts with the antigens of satellite virus HDV (HDVAgs); this interaction is required for encapsidation of HDV genomic RNA. Isoform M is N-terminally acetylated by host at a ratio of 90%, and N-glycosylated by host at the pre-S2 region. In terms of processing, myristoylated.

It localises to the virion membrane. Functionally, the large envelope protein exists in two topological conformations, one which is termed 'external' or Le-HBsAg and the other 'internal' or Li-HBsAg. In its external conformation the protein attaches the virus to cell receptors and thereby initiating infection. This interaction determines the species specificity and liver tropism. This attachment induces virion internalization predominantly through caveolin-mediated endocytosis. The large envelope protein also assures fusion between virion membrane and endosomal membrane. In its internal conformation the protein plays a role in virion morphogenesis and mediates the contact with the nucleocapsid like a matrix protein. Its function is as follows. The middle envelope protein plays an important role in the budding of the virion. It is involved in the induction of budding in a nucleocapsid independent way. In this process the majority of envelope proteins bud to form subviral lipoprotein particles of 22 nm of diameter that do not contain a nucleocapsid. The protein is Large envelope protein of Hepatitis B virus genotype H subtype adw4 (isolate Nicaragua/2928Nic/1997) (HBV-H).